Reading from the N-terminus, the 405-residue chain is Arginine biosynthesis bifunctional protein ArgJ (405 aa).

T152, K178, T189, E276, N400, and T405 together coordinate substrate. T189 serves as the catalytic Nucleophile.

This sequence belongs to the ArgJ family. In terms of assembly, heterotetramer of two alpha and two beta chains.

The protein resides in the cytoplasm. It catalyses the reaction N(2)-acetyl-L-ornithine + L-glutamate = N-acetyl-L-glutamate + L-ornithine. It carries out the reaction L-glutamate + acetyl-CoA = N-acetyl-L-glutamate + CoA + H(+). The protein operates within amino-acid biosynthesis; L-arginine biosynthesis; L-ornithine and N-acetyl-L-glutamate from L-glutamate and N(2)-acetyl-L-ornithine (cyclic): step 1/1. It participates in amino-acid biosynthesis; L-arginine biosynthesis; N(2)-acetyl-L-ornithine from L-glutamate: step 1/4. In terms of biological role, catalyzes two activities which are involved in the cyclic version of arginine biosynthesis: the synthesis of N-acetylglutamate from glutamate and acetyl-CoA as the acetyl donor, and of ornithine by transacetylation between N(2)-acetylornithine and glutamate. This Pseudomonas putida (strain ATCC 47054 / DSM 6125 / CFBP 8728 / NCIMB 11950 / KT2440) protein is Arginine biosynthesis bifunctional protein ArgJ.